An 871-amino-acid polypeptide reads, in one-letter code: Protein translocase subunit SecA (871 aa).

Residues glutamine 80, 98–102 (GEGKT), and aspartate 537 contribute to the ATP site.

The protein belongs to the SecA family. In terms of assembly, monomer and homodimer. Part of the essential Sec protein translocation apparatus which comprises SecA, SecYEG and auxiliary proteins SecDF. Other proteins may also be involved.

It localises to the cell inner membrane. The protein resides in the cytoplasm. It carries out the reaction ATP + H2O + cellular proteinSide 1 = ADP + phosphate + cellular proteinSide 2.. Part of the Sec protein translocase complex. Interacts with the SecYEG preprotein conducting channel. Has a central role in coupling the hydrolysis of ATP to the transfer of proteins into and across the cell membrane, serving as an ATP-driven molecular motor driving the stepwise translocation of polypeptide chains across the membrane. This Thermotoga sp. (strain RQ2) protein is Protein translocase subunit SecA.